A 756-amino-acid chain; its full sequence is Receptor-like protein 3 (756 aa).

The signal sequence occupies residues 1–50; the sequence is MTNEGRFKAKGFVRTSSTTRPIQALSFHMIGILLQCVLFISVLSIAVSEA. An N-cap region spans residues 51-88; the sequence is LCNSQDRESLLWFSGNVSSSVSPLNWNPSIDCCSWEGI. Over 51–725 the chain is Extracellular; that stretch reads LCNSQDRESL…ADTEDEEELK (675 aa). An N-linked (GlcNAc...) asparagine glycan is attached at asparagine 66. LRR repeat units lie at residues 95–119, 120–143, 145–169, 174–199, 201–225, 226–250, 252–274, 275–298, 299–322, 323–346, 348–370, 371–395, 397–419, 420–443, 445–471, 474–498, 499–521, and 522–546; these read DSHI…VLRL, HHLS…FLSA, DQLK…TFRN, CFPI…IFMQ, TFDL…MCKS, SPQL…LGRC, KLSV…IYNL, SELE…ITHL, TKLK…IGQL, SRLQ…LANC, NLVK…DFSR, FQSL…VHSC, SLSA…VLEL, ESLS…GILQ, CRNL…LISS, FPNL…LIKL, KSLA…WLGT, and FPHL…LFQL. Asparagine 126 and asparagine 169 each carry an N-linked (GlcNAc...) asparagine glycan. N-linked (GlcNAc...) asparagine glycosylation is present at asparagine 208. N-linked (GlcNAc...) asparagine glycans are attached at residues asparagine 262 and asparagine 273. Asparagine 334 and asparagine 345 each carry an N-linked (GlcNAc...) asparagine glycan. Asparagine 381 is a glycosylation site (N-linked (GlcNAc...) asparagine). Asparagine 434, asparagine 447, and asparagine 459 each carry an N-linked (GlcNAc...) asparagine glycan. One copy of the LRR 19; degenerate repeat lies at 548–569; the sequence is ALMSQKAYDATERNYLKLPVFV. LRR repeat units lie at residues 570–593, 608–631, 632–656, and 658–681; these read SPNN…IYIR, LKVL…ELSK, LTSL…LTSL, and YMSY…QFDT. A glycan (N-linked (GlcNAc...) asparagine) is linked at asparagine 573. Residue asparagine 666 is glycosylated (N-linked (GlcNAc...) asparagine). A C-cap/acidic domain region spans residues 699–725; the sequence is LTSCKASTKLPATTTNKADTEDEEELK. The chain crosses the membrane as a helical span at residues 726–746; it reads FIFILGVATGFFVSYCFYWCF. Over 747-756 the chain is Cytoplasmic; sequence FARLDAFISK.

Belongs to the RLP family. In terms of tissue distribution, expressed at very low levels in the shoot apex.

The protein resides in the cell membrane. Involved in the perception of CLV3 and CLV3-like peptides, that act as extracellular signals regulating meristems maintenance. Contributes, with WAKL22/RFO1, to resistance to F.oxysporum (f.) matthioli in cv. Columbia relative to cv. Ty-0. The chain is Receptor-like protein 3 from Arabidopsis thaliana (Mouse-ear cress).